Here is a 205-residue protein sequence, read N- to C-terminus: Holliday junction branch migration complex subunit RuvA (205 aa).

The tract at residues 1–64 (MIGKLKGVID…EDQIKLFGFR (64 aa)) is domain I. The domain II stretch occupies residues 65–143 (SDIEREWFRL…AFANVDPAVV (79 aa)). The interval 144 to 154 (HLAGAVDDDRA) is flexible linker. A domain III region spans residues 154 to 205 (APRPVKDAISALVNLGYGQPQAAAAIASVARDAGEGAETAQLIRLGLKELAK).

This sequence belongs to the RuvA family. As to quaternary structure, homotetramer. Forms an RuvA(8)-RuvB(12)-Holliday junction (HJ) complex. HJ DNA is sandwiched between 2 RuvA tetramers; dsDNA enters through RuvA and exits via RuvB. An RuvB hexamer assembles on each DNA strand where it exits the tetramer. Each RuvB hexamer is contacted by two RuvA subunits (via domain III) on 2 adjacent RuvB subunits; this complex drives branch migration. In the full resolvosome a probable DNA-RuvA(4)-RuvB(12)-RuvC(2) complex forms which resolves the HJ.

It localises to the cytoplasm. Functionally, the RuvA-RuvB-RuvC complex processes Holliday junction (HJ) DNA during genetic recombination and DNA repair, while the RuvA-RuvB complex plays an important role in the rescue of blocked DNA replication forks via replication fork reversal (RFR). RuvA specifically binds to HJ cruciform DNA, conferring on it an open structure. The RuvB hexamer acts as an ATP-dependent pump, pulling dsDNA into and through the RuvAB complex. HJ branch migration allows RuvC to scan DNA until it finds its consensus sequence, where it cleaves and resolves the cruciform DNA. This Afipia carboxidovorans (strain ATCC 49405 / DSM 1227 / KCTC 32145 / OM5) (Oligotropha carboxidovorans) protein is Holliday junction branch migration complex subunit RuvA.